The primary structure comprises 303 residues: Aspartate carbamoyltransferase catalytic subunit (303 aa).

R49 and T50 together coordinate carbamoyl phosphate. K77 lines the L-aspartate pocket. Residues R99, H126, and Q129 each coordinate carbamoyl phosphate. Residues R159 and R211 each contribute to the L-aspartate site. Residues S252 and P253 each contribute to the carbamoyl phosphate site.

The protein belongs to the aspartate/ornithine carbamoyltransferase superfamily. ATCase family. As to quaternary structure, heterododecamer (2C3:3R2) of six catalytic PyrB chains organized as two trimers (C3), and six regulatory PyrI chains organized as three dimers (R2).

The enzyme catalyses carbamoyl phosphate + L-aspartate = N-carbamoyl-L-aspartate + phosphate + H(+). It functions in the pathway pyrimidine metabolism; UMP biosynthesis via de novo pathway; (S)-dihydroorotate from bicarbonate: step 2/3. Catalyzes the condensation of carbamoyl phosphate and aspartate to form carbamoyl aspartate and inorganic phosphate, the committed step in the de novo pyrimidine nucleotide biosynthesis pathway. This chain is Aspartate carbamoyltransferase catalytic subunit, found in Listeria monocytogenes serotype 4b (strain F2365).